A 248-amino-acid polypeptide reads, in one-letter code: MSLFPSLPLLLLSVVATSYSETVTCEDSQKICPAVIACNSPGINGFPGKDGRDGTKGEKGEPGQGLRGLQGPPGKLGPPGNPGPSGSPGPKGQKGDPGESPDCDSSLAASERKALQTEMAHIKKWLTFSLGRQVGNKFFLTNGEMMTFDKVKALCAKFQASVATPRNAAENRAIQNLIKEEAFLGITDENTEGQFVDLIGNRLTYTNWNNGEPNNAGSDEDCVLLLKNGKWNDVPCSSSHLALCEFPI.

Residues 1 to 20 (MSLFPSLPLLLLSVVATSYS) form the signal peptide. The 58-residue stretch at 42–99 (GINGFPGKDGRDGTKGEKGEPGQGLRGLQGPPGKLGPPGNPGPSGSPGPKGQKGDPGE) folds into the Collagen-like domain. A disordered region spans residues 43–111 (INGFPGKDGR…DCDSSLAASE (69 aa)). The residue at position 47 (proline 47) is a 4-hydroxyproline. Over residues 49-61 (KDGRDGTKGEKGE) the composition is skewed to basic and acidic residues. A 4-hydroxyproline mark is found at proline 73, proline 79, proline 82, and proline 88. Residues 75–87 (KLGPPGNPGPSGS) show a composition bias toward pro residues. Positions 112-130 (RKALQTEMAHIKKWLTFSL) form a coiled coil. Residues 134–245 (VGNKFFLTNG…CSSSHLALCE (112 aa)) enclose the C-type lectin domain. Disulfide bonds link cysteine 155-cysteine 244 and cysteine 222-cysteine 236.

As to quaternary structure, oligomeric complex of 3 or more homotrimers. Interacts with MASP1 and MASP2. Interacts with MEP1A and MEP1B and may inhibit their catalytic activity. In terms of processing, hydroxylation on proline residues within the sequence motif, GXPG, is most likely to be 4-hydroxy as this fits the requirement for 4-hydroxylation in vertebrates.

The protein resides in the secreted. Its function is as follows. Calcium-dependent lectin involved in innate immune defense. Binds mannose, fucose and N-acetylglucosamine on different microorganisms and activates the lectin complement pathway. Binds to late apoptotic cells, as well as to apoptotic blebs and to necrotic cells, but not to early apoptotic cells, facilitating their uptake by macrophages. The protein is Mannose-binding protein C (MBL2) of Trachypithecus obscurus (Dusky leaf-monkey).